Consider the following 501-residue polypeptide: Tetrachloroethene reductive dehalogenase (501 aa).

A signal peptide (tat-type signal) is located at residues 1 to 37 (MEKKKKPELSRRDFGKLIIGGGAAATIAPFGVPGANA). Corrinoid contacts are provided by residues A74, Y207, 309–314 (NGVGQS), 329–332 (MGAC), and 341–343 (VRL). Residues 356–386 (KPIDFGVTEFCETCKKCARECPSKAITEGPR) form the 4Fe-4S ferredoxin-type 1 domain. Residues C366, C369, C372, and C376 each coordinate [4Fe-4S] cluster. Residue 394–401 (HNQSGKLQ) participates in corrinoid binding. [4Fe-4S] cluster is bound at residue C409. Residue Y419 participates in corrinoid binding. Positions 420, 423, and 427 each coordinate [4Fe-4S] cluster. Residues 420-439 (CGVCVAVCPFTKGNIWIHDG) form the 4Fe-4S ferredoxin-type 2 domain.

This sequence belongs to the PceA family. In terms of assembly, monomer. Requires [4Fe-4S] cluster as cofactor. It depends on corrinoid as a cofactor. Post-translationally, predicted to be exported by the Tat system. The position of the signal peptide cleavage has not been experimentally proven.

It localises to the cytoplasm. It is found in the cell inner membrane. The catalysed reaction is trichloroethene + chloride + A + H(+) = tetrachloroethene + AH2. It carries out the reaction trichloroethene + AH2 = (Z)-1,2-dichloroethene + chloride + A + H(+). With respect to regulation, both the processed and unprocessed enzymes are catalytically active. PCE-dependent growth and PceA activity are inhibited in the presence of high concentrations of 5,6-dimethylbenzimidazole (DMB), probably due to the formation a DMB-containing nor-B12 cofactor. Dechlorination of PCE is stimulated by ammonium ions. Activity is inhibited by chlorinated methanes. Its function is as follows. Catalyzes the reductive dechlorination of tetrachloroethene (PCE) to trichloroethene (TCE) and of trichloroethene to cis-1,2-dichloroethene (DCE). In addition, trans-1,3-dichloropropene, 1,1,3-trichloropropene and 2,3-dichloropropene are reduced to a mixture of mono-chloropropenes, 1,1-dichloropropene, and 2-chloropropene, respectively. Is also able to convert brominated phenols such as 4-bromophenol (4-BP), 2,4-dibromophenol (2,4-DBP) and 2,4,6-tribromophenol (2,4,6-TBP). Utilizes formate or pyruvate as electron donors. Titanium(III) citrate could also serve as electron donor. Reduced methyl viologen can act as the artificial electron donor. The sequence is that of Tetrachloroethene reductive dehalogenase from Sulfurospirillum multivorans (Dehalospirillum multivorans).